Consider the following 357-residue polypeptide: 3'-hydroxy-N-methyl-(S)-coclaurine 4'-O-methyltransferase 2 (357 aa).

Position 226 (Asp226) interacts with S-adenosyl-L-methionine. His264 functions as the Proton acceptor in the catalytic mechanism.

The protein belongs to the class I-like SAM-binding methyltransferase superfamily. Cation-independent O-methyltransferase family. COMT subfamily. As to quaternary structure, homodimer. Expressed in roots, stems, leaves and flowers.

It carries out the reaction (S)-3'-hydroxy-N-methylcoclaurine + S-adenosyl-L-methionine = (S)-reticuline + S-adenosyl-L-homocysteine + H(+). Its pathway is alkaloid biosynthesis; (S)-reticuline biosynthesis; (S)-reticuline from (S)-norcoclaurine: step 4/4. Functionally, involved in the biosynthesis of benzylisoquinoline alkaloids. Catalyzes the transfer of the methyl group to the 4'-hydroxyl group of 3'-hydroxy-N-methylcoclaurine to form reticuline. Can also use laudanosoline and, with a lower activity, 6-O-methylnorlaudanosoline and norlaudanosoline as substrates. Also involved in the papaverine biosynthesis. The sequence is that of 3'-hydroxy-N-methyl-(S)-coclaurine 4'-O-methyltransferase 2 from Papaver somniferum (Opium poppy).